The chain runs to 203 residues: Outer-membrane lipoprotein carrier protein (203 aa).

A signal peptide spans 1–21 (MKKLIISCCLLATFSAAGAWA). A disordered region spans residues 174–203 (ALKSQQSGPISADKFKFRPPKGVTVDDQRQ).

It belongs to the LolA family. In terms of assembly, monomer.

The protein resides in the periplasm. In terms of biological role, participates in the translocation of lipoproteins from the inner membrane to the outer membrane. Only forms a complex with a lipoprotein if the residue after the N-terminal Cys is not an aspartate (The Asp acts as a targeting signal to indicate that the lipoprotein should stay in the inner membrane). The chain is Outer-membrane lipoprotein carrier protein from Erwinia tasmaniensis (strain DSM 17950 / CFBP 7177 / CIP 109463 / NCPPB 4357 / Et1/99).